Here is a 133-residue protein sequence, read N- to C-terminus: ATP synthase epsilon chain, chloroplastic (133 aa).

It belongs to the ATPase epsilon chain family. As to quaternary structure, F-type ATPases have 2 components, CF(1) - the catalytic core - and CF(0) - the membrane proton channel. CF(1) has five subunits: alpha(3), beta(3), gamma(1), delta(1), epsilon(1). CF(0) has three main subunits: a, b and c.

The protein resides in the plastid. It is found in the chloroplast thylakoid membrane. Produces ATP from ADP in the presence of a proton gradient across the membrane. This Daucus carota (Wild carrot) protein is ATP synthase epsilon chain, chloroplastic.